Consider the following 596-residue polypeptide: Polyphenol oxidase B, chloroplastic (596 aa).

Residues 1 to 23 are disordered; sequence MASVVCNSSSSTTTTTLKTPFTS. Residues 1 to 87 constitute a chloroplast transit peptide; the sequence is MASVVCNSSS…ANAIPLAASA (87 aa). The span at 8–23 shows a compositional bias: low complexity; the sequence is SSSSTTTTTLKTPFTS. Disulfide bonds link Cys98–Cys114 and Cys113–Cys182. Cu cation contacts are provided by His181, His199, His208, His329, His333, and His371. The segment at residues 185–199 is a cross-link (2'-(S-cysteinyl)-histidine (Cys-His)); it reads CNGAYIIGGKELQVH.

Belongs to the tyrosinase family. Cu(2+) serves as cofactor.

The protein localises to the plastid. It is found in the chloroplast thylakoid lumen. The enzyme catalyses 2 catechol + O2 = 2 1,2-benzoquinone + 2 H2O. In terms of biological role, catalyzes the oxidation of mono- and o-diphenols to o-diquinones. This chain is Polyphenol oxidase B, chloroplastic, found in Solanum lycopersicum (Tomato).